The chain runs to 232 residues: Large ribosomal subunit protein uL1 (232 aa).

This sequence belongs to the universal ribosomal protein uL1 family. As to quaternary structure, part of the 50S ribosomal subunit.

Functionally, binds directly to 23S rRNA. The L1 stalk is quite mobile in the ribosome, and is involved in E site tRNA release. Protein L1 is also a translational repressor protein, it controls the translation of the L11 operon by binding to its mRNA. The protein is Large ribosomal subunit protein uL1 of Dichelobacter nodosus (strain VCS1703A).